The primary structure comprises 179 residues: Nucleoside-triphosphatase THEP1 (179 aa).

Residues 7–14 and 94–101 contribute to the ATP site; these read GRPGVGKT and LIIVDEIG.

It belongs to the THEP1 NTPase family.

It catalyses the reaction a ribonucleoside 5'-triphosphate + H2O = a ribonucleoside 5'-diphosphate + phosphate + H(+). Its function is as follows. Has nucleotide phosphatase activity towards ATP, GTP, CTP, TTP and UTP. May hydrolyze nucleoside diphosphates with lower efficiency. The sequence is that of Nucleoside-triphosphatase THEP1 from Thermotoga petrophila (strain ATCC BAA-488 / DSM 13995 / JCM 10881 / RKU-1).